The following is a 582-amino-acid chain: 2-succinyl-5-enolpyruvyl-6-hydroxy-3-cyclohexene-1-carboxylate synthase (582 aa).

Belongs to the TPP enzyme family. MenD subfamily. As to quaternary structure, homodimer. The cofactor is Mg(2+). Mn(2+) is required as a cofactor. Requires thiamine diphosphate as cofactor.

It carries out the reaction isochorismate + 2-oxoglutarate + H(+) = 5-enolpyruvoyl-6-hydroxy-2-succinyl-cyclohex-3-ene-1-carboxylate + CO2. Its pathway is quinol/quinone metabolism; 1,4-dihydroxy-2-naphthoate biosynthesis; 1,4-dihydroxy-2-naphthoate from chorismate: step 2/7. The protein operates within cofactor biosynthesis; phylloquinone biosynthesis. Catalyzes the thiamine diphosphate-dependent decarboxylation of 2-oxoglutarate and the subsequent addition of the resulting succinic semialdehyde-thiamine pyrophosphate anion to isochorismate to yield 2-succinyl-5-enolpyruvyl-6-hydroxy-3-cyclohexene-1-carboxylate (SEPHCHC). The protein is 2-succinyl-5-enolpyruvyl-6-hydroxy-3-cyclohexene-1-carboxylate synthase of Trichodesmium erythraeum (strain IMS101).